The sequence spans 427 residues: Glutamate-1-semialdehyde 2,1-aminomutase (427 aa).

The residue at position 265 (Lys265) is an N6-(pyridoxal phosphate)lysine.

The protein belongs to the class-III pyridoxal-phosphate-dependent aminotransferase family. HemL subfamily. As to quaternary structure, homodimer. Pyridoxal 5'-phosphate serves as cofactor.

Its subcellular location is the cytoplasm. The catalysed reaction is (S)-4-amino-5-oxopentanoate = 5-aminolevulinate. It participates in porphyrin-containing compound metabolism; protoporphyrin-IX biosynthesis; 5-aminolevulinate from L-glutamyl-tRNA(Glu): step 2/2. This is Glutamate-1-semialdehyde 2,1-aminomutase from Marinomonas sp. (strain MWYL1).